Reading from the N-terminus, the 351-residue chain is MYKLLILIDGISNSGGTDRVASTLSSLLSNHNYDVTLYSLNSGEPYYPVDNKVSIRQPKSSMRLFKLFEFIRYAKNTRPDGVMIISMGKLSVQALLLSKLFRVKSRLICCDHVSIETFSAAVRKLKVFCYGLAEKVVVLTQHDKNYLTSAFSLKNVYVVGNISPFHHENSLNRFDDVFARKQNRVLAVGRLTYQKNFGRLLDIWKNVHKQGWKLLIVGDGEEKAELLEKIKKYHLEESAEIVSPSKKISEYYRSSGVIAMTSRYEGLPMVLIEAKNYALPAIAFDCKTGPAEIIKDDGYVVDYQSNELFTAQLNQLIASEQLRKNFAQAAWQNSADYGPELILKKWNDILN.

This sequence belongs to the glycosyltransferase group 1 family. Glycosyltransferase 4 subfamily.

The protein operates within glycan metabolism; exopolysaccharide biosynthesis. In terms of biological role, involved in the biosynthesis of amylovoran which functions as a virulence factor. May be involved in the formation of galactose alpha-1,6 linkages in amylovoran. This Erwinia amylovora (Fire blight bacteria) protein is Amylovoran biosynthesis glycosyltransferase AmsD (amsD).